The sequence spans 203 residues: uncharacterized protein (203 aa).

The N-terminal stretch at 1–20 is a signal peptide; sequence MDELILPILILLFLVFVAYF.

This is an uncharacterized protein from Pasteurella multocida (strain Pm70).